Here is a 311-residue protein sequence, read N- to C-terminus: Probable manganese-dependent inorganic pyrophosphatase (311 aa).

6 residues coordinate Mn(2+): His9, Asp13, Asp15, Asp77, His99, and Asp151.

The protein belongs to the PPase class C family. Mn(2+) is required as a cofactor.

It is found in the cytoplasm. It carries out the reaction diphosphate + H2O = 2 phosphate + H(+). This chain is Probable manganese-dependent inorganic pyrophosphatase, found in Streptococcus suis (strain 98HAH33).